Reading from the N-terminus, the 231-residue chain is Ribose-5-phosphate isomerase A (231 aa).

Substrate-binding positions include 28–31, 83–86, and 96–99; these read TGST, DGAD, and KGGG. Glu-105 functions as the Proton acceptor in the catalytic mechanism. Residue Lys-123 coordinates substrate.

It belongs to the ribose 5-phosphate isomerase family. In terms of assembly, homodimer.

It catalyses the reaction aldehydo-D-ribose 5-phosphate = D-ribulose 5-phosphate. The protein operates within carbohydrate degradation; pentose phosphate pathway; D-ribose 5-phosphate from D-ribulose 5-phosphate (non-oxidative stage): step 1/1. In terms of biological role, catalyzes the reversible conversion of ribose-5-phosphate to ribulose 5-phosphate. The protein is Ribose-5-phosphate isomerase A of Rhizobium meliloti (strain 1021) (Ensifer meliloti).